Here is a 246-residue protein sequence, read N- to C-terminus: Mast cell protease 2 (246 aa).

An N-terminal signal peptide occupies residues 1 to 19 (MHRPPLPLVLLLLCCRAQA). Residues 20 to 21 (GE) constitute a propeptide, activation peptide. The Peptidase S1 domain maps to 22 to 244 (IIGGTESKPH…YRPWIDEVLK (223 aa)). Cys51 and Cys67 are joined by a disulfide. Catalysis depends on charge relay system residues His66 and Asp109. Asn120 is a glycosylation site (N-linked (GlcNAc...) asparagine). Disulfide bonds link Cys143/Cys208 and Cys174/Cys187. Residue Ser202 is the Charge relay system of the active site.

Belongs to the peptidase S1 family. Granzyme subfamily.

Its subcellular location is the secreted. The protein localises to the cytoplasmic granule. Putative mast cell chymase. The sequence is that of Mast cell protease 2 from Ovis aries (Sheep).